We begin with the raw amino-acid sequence, 172 residues long: Macro domain-containing protein lp_3408 (172 aa).

The region spanning 1–171 (MVEIKVIHGD…VFSTALAALT (171 aa)) is the Macro domain.

It belongs to the MacroD-type family.

The sequence is that of Macro domain-containing protein lp_3408 from Lactiplantibacillus plantarum (strain ATCC BAA-793 / NCIMB 8826 / WCFS1) (Lactobacillus plantarum).